The chain runs to 569 residues: Potassium-transporting ATPase potassium-binding subunit (569 aa).

The next 10 membrane-spanning stretches (helical) occupy residues 5–25 (GWAEIALTLGLAVAIGWPLGV), 65–85 (GYAGALLAFNFVGFLLVYAVL), 135–155 (LVLTVQNFLSAATGATVAAAL), 179–199 (LYVLLPLSFVVAIVLVALGLP), 254–274 (LTNLITAVSINVLGWAAFFAF), 286–306 (ALVIAASILLSAGAATVYWTE), 383–403 (GIAVMIVMAVLAVFVAGLMVG), 422–442 (LLTVLAIPVATLGFSAIAAVL), 489–509 (MGVAMAMGRFMPIVAVLAMAG), and 528–548 (GGLFVGLLIGVILILGGLQFF).

This sequence belongs to the KdpA family. The system is composed of three essential subunits: KdpA, KdpB and KdpC.

The protein localises to the cell inner membrane. Part of the high-affinity ATP-driven potassium transport (or Kdp) system, which catalyzes the hydrolysis of ATP coupled with the electrogenic transport of potassium into the cytoplasm. This subunit binds the periplasmic potassium ions and delivers the ions to the membrane domain of KdpB through an intramembrane tunnel. This Caulobacter sp. (strain K31) protein is Potassium-transporting ATPase potassium-binding subunit.